A 293-amino-acid polypeptide reads, in one-letter code: MSLNFQEIIATLNQFWRDRGCLIAQPYDTEKGAGTMNHHTFLRAIGPEPWSVAYVEPCRRPTDGRYGENPNRVQHYFQYQVIIKPSPDNIQEIYLDSLKALGIQPEDHDIRFVEDNWESPTLGAWGVGWEVWLDGMEITQFTYFQQCGGLDCRPVCIEITYGLERLAMYLQEVDAITKIRWNETTSYGDIFLQSEIEQCTYNFEASNPEMLFQLFSLYEAEAQQLIEKGLVMPSLDYVLKCSHTFNLLDARGVIAVAERTRYIGRIRHMARQVAHLYLAQREELGFPLQKAIA.

This sequence belongs to the class-II aminoacyl-tRNA synthetase family. As to quaternary structure, tetramer of two alpha and two beta subunits.

The protein localises to the cytoplasm. The catalysed reaction is tRNA(Gly) + glycine + ATP = glycyl-tRNA(Gly) + AMP + diphosphate. This Picosynechococcus sp. (strain ATCC 27264 / PCC 7002 / PR-6) (Agmenellum quadruplicatum) protein is Glycine--tRNA ligase alpha subunit.